The sequence spans 284 residues: Spermidine/putrescine transport system permease protein PotC homolog (284 aa).

A run of 6 helical transmembrane segments spans residues 13 to 33 (YFFL…LVSL), 76 to 96 (IIIG…SAFA), 116 to 136 (LATP…NTWL), 143 to 163 (GFFT…LILI), 189 to 209 (FFHI…LVVF), and 242 to 262 (AWAI…VCLI). Positions 72-263 (LINSIIIGVI…ISVLGVCLIT (192 aa)) constitute an ABC transmembrane type-1 domain.

It belongs to the binding-protein-dependent transport system permease family. CysTW subfamily.

It is found in the cell membrane. In terms of biological role, required for the activity of the bacterial transport system of putrescine and spermidine. In Mycoplasma genitalium (strain ATCC 33530 / DSM 19775 / NCTC 10195 / G37) (Mycoplasmoides genitalium), this protein is Spermidine/putrescine transport system permease protein PotC homolog (potC).